The sequence spans 312 residues: Ribosomal RNA small subunit methyltransferase H (312 aa).

S-adenosyl-L-methionine-binding positions include 34 to 36 (GGH), Asp54, Leu83, Asp99, and Gln106.

This sequence belongs to the methyltransferase superfamily. RsmH family.

It localises to the cytoplasm. It catalyses the reaction cytidine(1402) in 16S rRNA + S-adenosyl-L-methionine = N(4)-methylcytidine(1402) in 16S rRNA + S-adenosyl-L-homocysteine + H(+). Functionally, specifically methylates the N4 position of cytidine in position 1402 (C1402) of 16S rRNA. The protein is Ribosomal RNA small subunit methyltransferase H of Rubrobacter xylanophilus (strain DSM 9941 / JCM 11954 / NBRC 16129 / PRD-1).